A 700-amino-acid polypeptide reads, in one-letter code: Mei4-dependent protein 6 (700 aa).

6 Kelch repeats span residues 276–322 (CIYL…MVID), 327–381 (KLYL…FDHG), 390–439 (IVYV…KIER), 452–499 (KLYI…FCQR), 508–558 (RIFT…SRFG), and 569–619 (IIYL…RFHE).

In Schizosaccharomyces pombe (strain 972 / ATCC 24843) (Fission yeast), this protein is Mei4-dependent protein 6 (mde6).